Reading from the N-terminus, the 369-residue chain is Anhydro-N-acetylmuramic acid kinase (369 aa).

Residue 12 to 19 participates in ATP binding; it reads GTSMDGVD.

The protein belongs to the anhydro-N-acetylmuramic acid kinase family.

The enzyme catalyses 1,6-anhydro-N-acetyl-beta-muramate + ATP + H2O = N-acetyl-D-muramate 6-phosphate + ADP + H(+). It functions in the pathway amino-sugar metabolism; 1,6-anhydro-N-acetylmuramate degradation. Its pathway is cell wall biogenesis; peptidoglycan recycling. Catalyzes the specific phosphorylation of 1,6-anhydro-N-acetylmuramic acid (anhMurNAc) with the simultaneous cleavage of the 1,6-anhydro ring, generating MurNAc-6-P. Is required for the utilization of anhMurNAc either imported from the medium or derived from its own cell wall murein, and thus plays a role in cell wall recycling. The chain is Anhydro-N-acetylmuramic acid kinase from Shewanella oneidensis (strain ATCC 700550 / JCM 31522 / CIP 106686 / LMG 19005 / NCIMB 14063 / MR-1).